Consider the following 407-residue polypeptide: Nicotinate phosphoribosyltransferase (407 aa).

Histidine 228 bears the Phosphohistidine; by autocatalysis mark.

Belongs to the NAPRTase family. In terms of processing, transiently phosphorylated on a His residue during the reaction cycle. Phosphorylation strongly increases the affinity for substrates and increases the rate of nicotinate D-ribonucleotide production. Dephosphorylation regenerates the low-affinity form of the enzyme, leading to product release.

It carries out the reaction nicotinate + 5-phospho-alpha-D-ribose 1-diphosphate + ATP + H2O = nicotinate beta-D-ribonucleotide + ADP + phosphate + diphosphate. Its pathway is cofactor biosynthesis; NAD(+) biosynthesis; nicotinate D-ribonucleotide from nicotinate: step 1/1. 100-fold more active in the presence of saturating ATP. In terms of biological role, catalyzes the synthesis of beta-nicotinate D-ribonucleotide from nicotinate and 5-phospho-D-ribose 1-phosphate at the expense of ATP. Functions in the deamidating salvage pathway for production of NAD from nicotinamide. Displays a strict preference for nicotinate over nicotinamide substrate. In Acinetobacter baylyi (strain ATCC 33305 / BD413 / ADP1), this protein is Nicotinate phosphoribosyltransferase.